We begin with the raw amino-acid sequence, 308 residues long: Phosphoribosylaminoimidazole-succinocarboxamide synthase (308 aa).

This sequence belongs to the SAICAR synthetase family.

It catalyses the reaction 5-amino-1-(5-phospho-D-ribosyl)imidazole-4-carboxylate + L-aspartate + ATP = (2S)-2-[5-amino-1-(5-phospho-beta-D-ribosyl)imidazole-4-carboxamido]succinate + ADP + phosphate + 2 H(+). It functions in the pathway purine metabolism; IMP biosynthesis via de novo pathway; 5-amino-1-(5-phospho-D-ribosyl)imidazole-4-carboxamide from 5-amino-1-(5-phospho-D-ribosyl)imidazole-4-carboxylate: step 1/2. The protein is Phosphoribosylaminoimidazole-succinocarboxamide synthase of Stenotrophomonas maltophilia (strain R551-3).